Reading from the N-terminus, the 186-residue chain is Serine hydrolase RBBP9 (186 aa).

The tract at residues 63–67 is involved in binding to RB1; it reads LHCDE. Catalysis depends on charge relay system residues Ser75, Asp138, and His165.

This sequence belongs to the RBBP9 family. In terms of assembly, interacts with RB1; the interaction disrupts RB1 binding to E2F1. Interacts with RBL1 and RBL2. In terms of tissue distribution, expressed at higher levels in tumor tissues such as carcinoma.

The enzyme catalyses valacyclovir + H2O = acyclovir + L-valine + H(+). Inhibited by the natural product emetine produced by the ipecac root. In terms of biological role, serine hydrolase. Catalyzes the hydrolytic activation of amino acid ester of the antiviral prodrug valacyclovir to its corresponding active drug, acyclovir. May negatively regulate basal or autocrine TGF-beta signaling by suppressing SMAD2-SMAD3 phosphorylation. May play a role in the transformation process due to its capacity to confer resistance to the growth-inhibitory effects of TGF-beta through interaction with RB1 and the subsequent displacement of E2F1. The protein is Serine hydrolase RBBP9 of Homo sapiens (Human).